The sequence spans 88 residues: Cell division topological specificity factor (88 aa).

The protein belongs to the MinE family.

Its function is as follows. Prevents the cell division inhibition by proteins MinC and MinD at internal division sites while permitting inhibition at polar sites. This ensures cell division at the proper site by restricting the formation of a division septum at the midpoint of the long axis of the cell. In Acidovorax ebreus (strain TPSY) (Diaphorobacter sp. (strain TPSY)), this protein is Cell division topological specificity factor.